Reading from the N-terminus, the 557-residue chain is Urocanate hydratase (557 aa).

NAD(+) is bound by residues 53 to 54, Q131, 177 to 179, 197 to 202, 243 to 244, 264 to 268, 274 to 275, and 323 to 324; these read GG, GMG, ECQQSR, NA, QTSAH, YL, and YG. C411 is a catalytic residue. Residues 455–456 and G493 each bind NAD(+); that span reads RE.

In terms of assembly, homodimer. It depends on NAD(+) as a cofactor.

The protein localises to the cytoplasm. The enzyme catalyses 4-imidazolone-5-propanoate = trans-urocanate + H2O. The protein operates within amino-acid degradation; L-histidine degradation into L-glutamate; N-formimidoyl-L-glutamate from L-histidine: step 2/3. Its function is as follows. Catalyzes the conversion of urocanate to 4-imidazolone-5-propionate. The protein is Urocanate hydratase of Pseudomonas putida (Arthrobacter siderocapsulatus).